We begin with the raw amino-acid sequence, 169 residues long: MLRSEKPVAVEDIVNIYKESPSIIITHYHGLTVSQVSVLREALKSKEAGFKVVKNTLAKIAANQTGLNSIANLFAGPTAIVYSKEPVEMAKLVVNFAKANDNLKIIGGIVDNHVLDEHSIKELSKLLTLNELRGKIIGLLQAPATQVVGVLQAPSSSMARVIQAYASKN.

This sequence belongs to the universal ribosomal protein uL10 family. In terms of assembly, part of the ribosomal stalk of the 50S ribosomal subunit. The N-terminus interacts with L11 and the large rRNA to form the base of the stalk. The C-terminus forms an elongated spine to which L12 dimers bind in a sequential fashion forming a multimeric L10(L12)X complex.

Its function is as follows. Forms part of the ribosomal stalk, playing a central role in the interaction of the ribosome with GTP-bound translation factors. The protein is Large ribosomal subunit protein uL10 of Rickettsia rickettsii (strain Iowa).